The primary structure comprises 199 residues: 5'-deoxynucleotidase YfbR (199 aa).

Substrate-binding positions include 18–19 (RW) and His33. Positions 30–142 (VSEHSLQVAM…VKQADALCAY (113 aa)) constitute an HD domain. Positions 33, 68, and 69 each coordinate a divalent metal cation. Residues Asp69, 77–80 (DLPT), and Asp137 contribute to the substrate site. Residue Asp137 coordinates a divalent metal cation.

Belongs to the 5DNU family. As to quaternary structure, homodimer. A divalent metal cation is required as a cofactor.

The protein localises to the cytoplasm. It catalyses the reaction a 2'-deoxyribonucleoside 5'-phosphate + H2O = a 2'-deoxyribonucleoside + phosphate. Catalyzes the strictly specific dephosphorylation of 2'-deoxyribonucleoside 5'-monophosphates. In Shigella flexneri serotype 5b (strain 8401), this protein is 5'-deoxynucleotidase YfbR.